The sequence spans 590 residues: MKTCYYELLGVETHASDLELKKAYRKKALQYHPDKNPDNVEEATQKFAVIRAAYEVLSDPQERAWYDSHKEQILNDTPPSTDDYYDYEVDATVTGVTTDELLLFFNSALYTKIDNSAAGIYQIAGKIFAKLAKDEILSGKRLGKFSEYQDDVFEQDINSIGYLKACDNFINKTDKLLYPLFGYSPTDYEYLKHFYKTWSAFNTLKSFSWKDEYMYSKNYDRRTKREVNRRNEKARQQARNEYNKTVKRFVVFIKKLDKRMKEGAKIAEEQRKLKEQQRKNELNNRRKFGNDNNDEEKFHLQSWQTVKEENWDELEKVYDNFGEFENSKNDKEGEVLIYECFICNKTFKSEKQLKNHINTKLHKKNMEEIRKEMEEENITLGLDNLSDLEKFDSADESVKEKEDIDLQALQAELAEIERKLAESSSEDESEDDNLNIEMDIEVEDVSSDENVHVNTKNKKKRKKKKKAKVDTETEESESFDDTKDKRSNELDDLLASLGDKGLQTDDDEDWSTKAKKKKGKQPKKNSKSTKSTPSLSTLPSSMSPTSAIEVCTTCGESFDSRNKLFNHVKIAGHAAVKNVVKRKKVKTKRI.

The region spanning 3–72 is the J domain; sequence TCYYELLGVE…RAWYDSHKEQ (70 aa). Residues 269 to 284 are compositionally biased toward basic and acidic residues; sequence EQRKLKEQQRKNELNN. The interval 269 to 293 is disordered; it reads EQRKLKEQQRKNELNNRRKFGNDNN. The C2H2-type 1 zinc-finger motif lies at 338 to 362; the sequence is YECFICNKTFKSEKQLKNHINTKLH. Ser-393 carries the phosphoserine modification. Residues 441–546 form a disordered region; it reads EVEDVSSDEN…TLPSSMSPTS (106 aa). Residues 455-467 are compositionally biased toward basic residues; sequence TKNKKKRKKKKKA. Residues 480–489 show a composition bias toward basic and acidic residues; sequence DDTKDKRSNE. A Phosphothreonine modification is found at Thr-504. Residues 513–527 are compositionally biased toward basic residues; sequence KAKKKKGKQPKKNSK. Residues 528–546 are compositionally biased toward low complexity; that stretch reads STKSTPSLSTLPSSMSPTS. The C2H2-type 2 zinc finger occupies 549–573; the sequence is EVCTTCGESFDSRNKLFNHVKIAGH.

It localises to the nucleus. The sequence is that of J protein JJJ1 (JJJ1) from Saccharomyces cerevisiae (strain ATCC 204508 / S288c) (Baker's yeast).